The chain runs to 458 residues: Exodeoxyribonuclease 7 large subunit (458 aa).

The protein belongs to the XseA family. As to quaternary structure, heterooligomer composed of large and small subunits.

Its subcellular location is the cytoplasm. It catalyses the reaction Exonucleolytic cleavage in either 5'- to 3'- or 3'- to 5'-direction to yield nucleoside 5'-phosphates.. Functionally, bidirectionally degrades single-stranded DNA into large acid-insoluble oligonucleotides, which are then degraded further into small acid-soluble oligonucleotides. The protein is Exodeoxyribonuclease 7 large subunit of Geobacter sp. (strain M21).